Consider the following 338-residue polypeptide: GTPase Obg (338 aa).

The Obg domain maps to 1 to 159 (MSFIDEVKIN…RWIRMELKLM (159 aa)). Residues 58–79 (DLRQHPHQKAGRGKNGMGSDRH) are disordered. An OBG-type G domain is found at 160 to 331 (ADVGLLGMPS…LLDDIAFNLW (172 aa)). GTP contacts are provided by residues 166–173 (GMPSVGKS), 191–195 (FTTLK), 213–216 (DIPG), 283–286 (NKID), and 312–314 (SAA). Residues serine 173 and threonine 193 each contribute to the Mg(2+) site.

Belongs to the TRAFAC class OBG-HflX-like GTPase superfamily. OBG GTPase family. In terms of assembly, monomer. Requires Mg(2+) as cofactor.

It localises to the cytoplasm. In terms of biological role, an essential GTPase which binds GTP, GDP and possibly (p)ppGpp with moderate affinity, with high nucleotide exchange rates and a fairly low GTP hydrolysis rate. Plays a role in control of the cell cycle, stress response, ribosome biogenesis and in those bacteria that undergo differentiation, in morphogenesis control. This Citrifermentans bemidjiense (strain ATCC BAA-1014 / DSM 16622 / JCM 12645 / Bem) (Geobacter bemidjiensis) protein is GTPase Obg.